Reading from the N-terminus, the 132-residue chain is Hemoglobin subunit beta-1 (132 aa).

The Globin domain occupies tryptophan 1–histidine 132. Heme b-binding residues include histidine 49 and histidine 78.

This sequence belongs to the globin family. Hb 1 is a heterotetramer of two alpha-1 and two beta-1 chains. Hb 2 is a heterotetramer of two alpha-2 and two beta-1 chains. In terms of tissue distribution, red blood cells.

Involved in oxygen transport from gills to the various peripheral tissues. This chain is Hemoglobin subunit beta-1 (hbb1), found in Arctogadus glacialis (Arctic cod).